The chain runs to 506 residues: Thyroid hormone receptor alpha (506 aa).

The tract at residues 1–32 (MEQKPSKVECGSDPEENSARSPDGKRKRKNGQ) is disordered. The modulating stretch occupies residues 1–52 (MEQKPSKVECGSDPEENSARSPDGKRKRKNGQCSLKTSMSGYIPSYLDKDEQ). Zn(2+) is bound by residues Cys-53, Cys-56, Cys-70, Cys-73, Cys-91, Cys-97, Cys-107, and Cys-110. 2 NR C4-type zinc fingers span residues 53-73 (CVVC…CEGC) and 91-115 (CKYD…FKKC). A DNA-binding region (nuclear receptor) is located at residues 53-127 (CVVCGDKATG…VGMAMDLVLD (75 aa)). The NR LBD domain maps to 163–407 (EEWDLIHVAT…EGQQLLGMHV (245 aa)). 3,3',5-triiodo-L-thyronine-binding residues include Arg-228 and Ser-277. Positions 460-506 (GEDDSSEAGSLTSSDEDPEVCEDAAQATQPLPEAPPRADGEGGGGGS) are disordered.

The protein belongs to the nuclear hormone receptor family. NR1 subfamily. In terms of assembly, binds DNA as a dimer; homodimer and heterodimer with RXRB. Interacts with NCOA3 and NCOA6 coactivators, leading to a strong increase of transcription of target genes. Probably interacts with SFPQ. Interacts with C1D. Interacts with AKAP13. Interacts with TP53INP2. Interacts with PER2. Interacts with PER2. Isoform alpha-2 and isoform alpha-1 interact with TACC1, but the interaction with alpha-1 is weaker. The interaction with isoform alpha-1, but not alpha-2, is decreased in the presence of thyroid hormone T3.

The protein resides in the nucleus. It is found in the cytoplasm. In terms of biological role, nuclear hormone receptor that can act as a repressor or activator of transcription. High affinity receptor for thyroid hormones, including triiodothyronine and thyroxine. The protein is Thyroid hormone receptor alpha (THRA) of Sus scrofa (Pig).